The primary structure comprises 53 residues: Lantibiotic paenibacillin (53 aa).

The propeptide occupies 1 to 24 (MKVDQMFDLDLRKSYEASELSPQA). An N-acetylalanine modification is found at alanine 24. A 2,3-didehydroalanine (Ser) modification is found at serine 25. A 2,3-didehydrobutyrine mark is found at threonine 29 and threonine 30. Residues 34-38 (SKAVC) constitute a cross-link (lanthionine (Ser-Cys)). Cross-links (beta-methyllanthionine (Thr-Cys)) lie at residues 40–43 (TLTC), 42–45 (TCIC), and 46–49 (TGSC). Positions 48–52 (SCSNC) form a cross-link, lanthionine (Ser-Cys). A 2,3-didehydroalanine (Ser) modification is found at serine 50.

Post-translationally, maturation of lantibiotics involves the enzymatic conversion of Thr, and Ser into dehydrated AA and the formation of thioether bonds with cysteine. This is followed by membrane translocation and cleavage of the modified precursor. In terms of processing, the structure of the 2,3-didehydrobutyrines is not discussed in PubMed:17071789.

The protein resides in the secreted. Functionally, lanthionine-containing peptide antibiotic (lantibiotic) active on Gram-positive bacteria. The bactericidal activity of lantibiotics is based on depolarization of energized bacterial cytoplasmic membranes, initiated by the formation of aqueous transmembrane pores. Lacks antibacterial activity against Gram-negative bacteria. The polypeptide is Lantibiotic paenibacillin (Paenibacillus polymyxa (Bacillus polymyxa)).